The primary structure comprises 513 residues: Probable tubulin polyglutamylase ttll-15 (513 aa).

The TTL domain occupies 73-411; sequence VTGSYESAHT…STPITKEADI (339 aa). ATP-binding positions include 216 to 219, K229, and D231; that span reads QKFV.

It belongs to the tubulin--tyrosine ligase family. As to expression, expressed in hypodermis and pharyngeal muscles.

Probable polyglutamylase that forms polyglutamate side chains on tubulin. Probably acts when complexed with other proteins. Appears to be dispensable for polar spindle formation in dividing embryonic cells, for cilia-dependent osmotic avoidance and for male mating behavior. Regulates microtubule dynamics in uterine muscle cells. This Caenorhabditis elegans protein is Probable tubulin polyglutamylase ttll-15.